A 174-amino-acid polypeptide reads, in one-letter code: Peptide methionine sulfoxide reductase MsrA (174 aa).

The active site involves Cys10.

The protein belongs to the MsrA Met sulfoxide reductase family.

The catalysed reaction is L-methionyl-[protein] + [thioredoxin]-disulfide + H2O = L-methionyl-(S)-S-oxide-[protein] + [thioredoxin]-dithiol. It catalyses the reaction [thioredoxin]-disulfide + L-methionine + H2O = L-methionine (S)-S-oxide + [thioredoxin]-dithiol. In terms of biological role, has an important function as a repair enzyme for proteins that have been inactivated by oxidation. Catalyzes the reversible oxidation-reduction of methionine sulfoxide in proteins to methionine. This is Peptide methionine sulfoxide reductase MsrA from Acinetobacter baumannii (strain SDF).